An 807-amino-acid chain; its full sequence is Sucrose synthase 2 (807 aa).

The interval 274–752 (MVFNVVILSP…GLKRIYERYT (479 aa)) is GT-B glycosyltransferase.

This sequence belongs to the glycosyltransferase 1 family. Plant sucrose synthase subfamily. In terms of tissue distribution, detected in the whole plant but at lower levels. Predominantly expressed in developing siliques. Also detected in the root tip. Detected in the embryo, endosperm and seed coat (at the protein level).

Its subcellular location is the cytoplasm. It localises to the plastid membrane. The catalysed reaction is an NDP-alpha-D-glucose + D-fructose = a ribonucleoside 5'-diphosphate + sucrose + H(+). Functionally, sucrose-cleaving enzyme that provides UDP-glucose and fructose for various metabolic pathways. Modulates metabolic homeostasis and directs carbon towards starch synthesis in developing seeds. The protein is Sucrose synthase 2 (SUS2) of Arabidopsis thaliana (Mouse-ear cress).